The following is a 191-amino-acid chain: Guanylate kinase (191 aa).

The Guanylate kinase-like domain maps to 4–182; that stretch reads GRLIVVSGPS…AREEMIEIMR (179 aa). 11 to 18 provides a ligand contact to ATP; sequence GPSGAGKS.

Belongs to the guanylate kinase family.

It is found in the cytoplasm. It carries out the reaction GMP + ATP = GDP + ADP. Essential for recycling GMP and indirectly, cGMP. The protein is Guanylate kinase of Rubrobacter xylanophilus (strain DSM 9941 / JCM 11954 / NBRC 16129 / PRD-1).